Here is an 85-residue protein sequence, read N- to C-terminus: Large ribosomal subunit protein bL27 (85 aa).

The disordered stretch occupies residues 1-21 (MAHKKAGGSTRNGRDSEGKRL).

The protein belongs to the bacterial ribosomal protein bL27 family.

In Hamiltonella defensa subsp. Acyrthosiphon pisum (strain 5AT), this protein is Large ribosomal subunit protein bL27.